The sequence spans 128 residues: uncharacterized protein (128 aa).

Residues 5–128 (SIHHIAIICS…DQLPLELYEQ (124 aa)) enclose the VOC domain. H8, E56, H77, and E124 together coordinate a divalent metal cation.

This is an uncharacterized protein from Bacillus subtilis (strain 168).